Consider the following 257-residue polypeptide: Hydroxyacylglutathione hydrolase (257 aa).

The Zn(2+) site is built by histidine 56, histidine 58, aspartate 60, histidine 61, histidine 112, aspartate 131, and histidine 169.

This sequence belongs to the metallo-beta-lactamase superfamily. Glyoxalase II family. As to quaternary structure, monomer. Zn(2+) serves as cofactor.

The catalysed reaction is an S-(2-hydroxyacyl)glutathione + H2O = a 2-hydroxy carboxylate + glutathione + H(+). It functions in the pathway secondary metabolite metabolism; methylglyoxal degradation; (R)-lactate from methylglyoxal: step 2/2. In terms of biological role, thiolesterase that catalyzes the hydrolysis of S-D-lactoyl-glutathione to form glutathione and D-lactic acid. This is Hydroxyacylglutathione hydrolase from Ectopseudomonas mendocina (strain ymp) (Pseudomonas mendocina).